The primary structure comprises 445 residues: Phosphoglucosamine mutase (445 aa).

Ser-99 functions as the Phosphoserine intermediate in the catalytic mechanism. Positions 99, 242, 244, and 246 each coordinate Mg(2+). Ser-99 is subject to Phosphoserine.

This sequence belongs to the phosphohexose mutase family. It depends on Mg(2+) as a cofactor. In terms of processing, activated by phosphorylation.

The catalysed reaction is alpha-D-glucosamine 1-phosphate = D-glucosamine 6-phosphate. Functionally, catalyzes the conversion of glucosamine-6-phosphate to glucosamine-1-phosphate. The sequence is that of Phosphoglucosamine mutase from Nitratiruptor sp. (strain SB155-2).